Reading from the N-terminus, the 166-residue chain is Transcriptional repressor NrdR (166 aa).

Residues 3 to 34 fold into a zinc finger; it reads CPFCGHDDTQVKDSRSTEDGVAIRRRRVCSAC. In terms of domain architecture, ATP-cone spans 49–139; it reads LSVTKADGRR…VYRDFREVEA (91 aa). Residues 146-166 form a disordered region; the sequence is DMKPIPGETDTPSPDDSQETP.

The protein belongs to the NrdR family. Zn(2+) is required as a cofactor.

Its function is as follows. Negatively regulates transcription of bacterial ribonucleotide reductase nrd genes and operons by binding to NrdR-boxes. The chain is Transcriptional repressor NrdR from Gluconobacter oxydans (strain 621H) (Gluconobacter suboxydans).